Here is a 315-residue protein sequence, read N- to C-terminus: Glutathione synthetase (315 aa).

The 186-residue stretch at 125 to 310 (KLYTAWFADL…ITGMLMDAIE (186 aa)) folds into the ATP-grasp domain. 151–207 (WEKHGDIIMKPLDGMGGASIFRVKEGDPNIGVIAETLTELGNRYCMAQNYLPAIKDG) is a binding site for ATP. Glutamate 281 and asparagine 283 together coordinate Mg(2+).

This sequence belongs to the prokaryotic GSH synthase family. Mg(2+) is required as a cofactor. Mn(2+) serves as cofactor.

It carries out the reaction gamma-L-glutamyl-L-cysteine + glycine + ATP = glutathione + ADP + phosphate + H(+). Its pathway is sulfur metabolism; glutathione biosynthesis; glutathione from L-cysteine and L-glutamate: step 2/2. This Salmonella typhimurium (strain LT2 / SGSC1412 / ATCC 700720) protein is Glutathione synthetase.